A 410-amino-acid chain; its full sequence is MAKINDNYLKLKAGYLFPEIGRRVREFSAANPEAKVIRLGIGDVTRPLAPAIIKAFHDAVDDLATIDNFAGYGPEQGYDWLINAIIEKSYKPLGVSLKTEEMFISDGSKCDCANILDIFALDNVVAIGDPVYPVYNDTNVMIGRTGDADEKGYYKGIVYMPCTEANGFIPSLPTEKVDIIYLCFPNNPTGTVATKAELKKWVDYANANDAVIFFDAAYEAFITDPAIPHSIYEIEGAKKCAIEFRSFSKTAGFTGVRCGLVVVPEEVMGTTPTGEKYSFNKLWLRRTTTKFNGASYPVQKAAAAVYSDEGWKQNKEIIDYYMENARIIREGLAAAGLTVYGGVNAPYIWLKTPGGMSSWDFFDKLLTECNVVGTPGSGFGPSGEGFFRLSAFGHRENVIEAVERIKKNLK.

Residues tyrosine 15 and glycine 42 each contribute to the substrate site. Pyridoxal 5'-phosphate-binding positions include tyrosine 72, 108-109 (SK), tyrosine 132, asparagine 187, tyrosine 218, and 246-248 (SFS). Substrate-binding residues include lysine 109, tyrosine 132, and asparagine 187. Lysine 249 is modified (N6-(pyridoxal phosphate)lysine). Residues arginine 257 and asparagine 292 each contribute to the pyridoxal 5'-phosphate site. The substrate site is built by asparagine 292 and arginine 388.

Belongs to the class-I pyridoxal-phosphate-dependent aminotransferase family. LL-diaminopimelate aminotransferase subfamily. Homodimer. It depends on pyridoxal 5'-phosphate as a cofactor.

The enzyme catalyses (2S,6S)-2,6-diaminopimelate + 2-oxoglutarate = (S)-2,3,4,5-tetrahydrodipicolinate + L-glutamate + H2O + H(+). It participates in amino-acid biosynthesis; L-lysine biosynthesis via DAP pathway; LL-2,6-diaminopimelate from (S)-tetrahydrodipicolinate (aminotransferase route): step 1/1. Its function is as follows. Involved in the synthesis of meso-diaminopimelate (m-DAP or DL-DAP), required for both lysine and peptidoglycan biosynthesis. Catalyzes the direct conversion of tetrahydrodipicolinate to LL-diaminopimelate. This Geobacter metallireducens (strain ATCC 53774 / DSM 7210 / GS-15) protein is LL-diaminopimelate aminotransferase.